The chain runs to 509 residues: tRNA-2-methylthio-N(6)-dimethylallyladenosine synthase (509 aa).

A compositionally biased stretch (polar residues) spans 1–15; it reads MNEQQRLASQQANSS. The disordered stretch occupies residues 1 to 25; the sequence is MNEQQRLASQQANSSTKKEEKDYSK. Over residues 16–25 the composition is skewed to basic and acidic residues; sequence TKKEEKDYSK. Residues 66-184 enclose the MTTase N-terminal domain; the sequence is RKFYIRTYGC…LPYILKDAMF (119 aa). Positions 75, 111, 145, 221, 225, and 228 each coordinate [4Fe-4S] cluster. A Radical SAM core domain is found at 207–437; the sequence is RRGDIKAWVN…NTLVNTLAIE (231 aa). The TRAM domain occupies 440-503; sequence SRYKGQIVEV…TWSLNGELVE (64 aa).

This sequence belongs to the methylthiotransferase family. MiaB subfamily. As to quaternary structure, monomer. The cofactor is [4Fe-4S] cluster.

It is found in the cytoplasm. The enzyme catalyses N(6)-dimethylallyladenosine(37) in tRNA + (sulfur carrier)-SH + AH2 + 2 S-adenosyl-L-methionine = 2-methylsulfanyl-N(6)-dimethylallyladenosine(37) in tRNA + (sulfur carrier)-H + 5'-deoxyadenosine + L-methionine + A + S-adenosyl-L-homocysteine + 2 H(+). Its function is as follows. Catalyzes the methylthiolation of N6-(dimethylallyl)adenosine (i(6)A), leading to the formation of 2-methylthio-N6-(dimethylallyl)adenosine (ms(2)i(6)A) at position 37 in tRNAs that read codons beginning with uridine. The protein is tRNA-2-methylthio-N(6)-dimethylallyladenosine synthase of Bacillus cereus (strain B4264).